The following is a 165-amino-acid chain: Ureidoglycolate lyase (165 aa).

Belongs to the ureidoglycolate lyase family. In terms of assembly, homodimer. Ni(2+) serves as cofactor.

It carries out the reaction (S)-ureidoglycolate = urea + glyoxylate. The protein operates within nitrogen metabolism; (S)-allantoin degradation. Its function is as follows. Catalyzes the catabolism of the allantoin degradation intermediate (S)-ureidoglycolate, generating urea and glyoxylate. Involved in the utilization of allantoin as nitrogen source. This Chelativorans sp. (strain BNC1) protein is Ureidoglycolate lyase.